The chain runs to 507 residues: Maturase K (507 aa).

The protein belongs to the intron maturase 2 family. MatK subfamily.

It localises to the plastid. It is found in the chloroplast. In terms of biological role, usually encoded in the trnK tRNA gene intron. Probably assists in splicing its own and other chloroplast group II introns. This chain is Maturase K, found in Magnolia champaca (Yellow jade orchid tree).